The sequence spans 418 residues: Tyrosine--tRNA ligase (418 aa).

Tyrosine 34 serves as a coordination point for L-tyrosine. The 'HIGH' region motif lies at 39-48 (PTADSLHLGH). L-tyrosine-binding residues include tyrosine 169 and glutamine 173. The short motif at 229 to 233 (KFGKS) is the 'KMSKS' region element. Residue lysine 232 participates in ATP binding. Residues 352–418 (NNIVELLVSS…GKKKYFVLTY (67 aa)) form the S4 RNA-binding domain.

This sequence belongs to the class-I aminoacyl-tRNA synthetase family. TyrS type 1 subfamily. As to quaternary structure, homodimer.

It localises to the cytoplasm. The enzyme catalyses tRNA(Tyr) + L-tyrosine + ATP = L-tyrosyl-tRNA(Tyr) + AMP + diphosphate + H(+). Functionally, catalyzes the attachment of tyrosine to tRNA(Tyr) in a two-step reaction: tyrosine is first activated by ATP to form Tyr-AMP and then transferred to the acceptor end of tRNA(Tyr). This chain is Tyrosine--tRNA ligase, found in Streptococcus pneumoniae (strain ATCC BAA-255 / R6).